The following is a 359-amino-acid chain: Stearoyl-CoA desaturase (359 aa).

The Cytoplasmic segment spans residues 1-72; sequence MPAHLLQEEI…EGPKPKLEYV (72 aa). Residues 73-93 traverse the membrane as a helical segment; the sequence is WRNIILMGLLHLGALYGITLI. Asn-75 serves as a coordination point for substrate. The Lumenal segment spans residues 94–97; sequence PTCK. Residues 98 to 118 form a helical membrane-spanning segment; it reads IYTFLWVLFYYMMSALGITAG. Residues 119–217 are Cytoplasmic-facing; sequence VHRLWSHRTY…EKLVMFQRRY (99 aa). The Fe cation site is built by His-120 and His-125. The short motif at 120 to 125 is the Histidine box-1 element; the sequence is HRLWSH. Positions 148, 155, and 156 each coordinate substrate. 3 residues coordinate Fe cation: His-157, His-160, and His-161. The Histidine box-2 motif lies at 157–161; the sequence is HRAHH. Substrate contacts are provided by Arg-188 and Lys-189. Phosphoserine is present on Ser-203. The chain crosses the membrane as a helical span at residues 218–237; sequence YKPGVLLLCFILPTLVPWYL. Topologically, residues 238–241 are lumenal; it reads WGET. A helical membrane pass occupies residues 242–263; that stretch reads FQNSLFFATLLRYAVVLNATWL. Trp-262 is a substrate binding site. Topologically, residues 264–359 are cytoplasmic; the sequence is VNSAAHMYGY…RTGEESCKSG (96 aa). Fe cation contacts are provided by His-269, His-298, His-301, and His-302. A Histidine box-3 motif is present at residues 298–302; the sequence is HNYHH.

It belongs to the fatty acid desaturase type 1 family. Fe(2+) is required as a cofactor.

The protein resides in the endoplasmic reticulum membrane. It catalyses the reaction octadecanoyl-CoA + 2 Fe(II)-[cytochrome b5] + O2 + 2 H(+) = (9Z)-octadecenoyl-CoA + 2 Fe(III)-[cytochrome b5] + 2 H2O. The enzyme catalyses hexadecanoyl-CoA + 2 Fe(II)-[cytochrome b5] + O2 + 2 H(+) = (9Z)-hexadecenoyl-CoA + 2 Fe(III)-[cytochrome b5] + 2 H2O. Its function is as follows. Stearoyl-CoA desaturase that utilizes O(2) and electrons from reduced cytochrome b5 to introduce the first double bond into saturated fatty acyl-CoA substrates. Catalyzes the insertion of a cis double bond at the delta-9 position into fatty acyl-CoA substrates including palmitoyl-CoA and stearoyl-CoA. Gives rise to a mixture of 16:1 and 18:1 unsaturated fatty acids. Plays an important role in lipid biosynthesis. Plays an important role in regulating the expression of genes that are involved in lipogenesis and in regulating mitochondrial fatty acid oxidation. Plays an important role in body energy homeostasis. Contributes to the biosynthesis of membrane phospholipids, cholesterol esters and triglycerides. This is Stearoyl-CoA desaturase (SCD) from Capra hircus (Goat).